Consider the following 141-residue polypeptide: Period circadian protein (141 aa).

The segment at 1–141 is disordered; the sequence is EGSGGSGSSG…VTLTESLLNK (141 aa). Over residues 11-23 the composition is skewed to polar residues; it reads HFTTGSNVHMSSV. Over residues 29-68 the composition is skewed to gly residues; it reads GGTGGTGTGTGTGTGTGTGTGTGTGTGTGTGTGTGTGTGT. 19 consecutive repeat copies span residues 30–31, 33–34, 35–36, 37–38, 39–40, 41–42, 43–44, 45–46, 47–48, 49–50, 51–52, 53–54, 55–56, 57–58, 59–60, 61–62, 63–64, 65–66, and 67–68. The interval 30–94 is 32 X 2 AA approximate tandem repeats of G-T; that stretch reads GTGGTGTGTG…ANGTGTGKGT (65 aa). The 20; approximate repeat unit spans residues 69–70; it reads AS. Low complexity predominate over residues 69–85; that stretch reads ASGTATGTASGTATGTA. Copy 21 of the repeat occupies 71 to 72; it reads GT. A 22; approximate repeat occupies 73–74; sequence AT. Copy 23 of the repeat occupies 75–76; that stretch reads GT. A 24; approximate repeat occupies 77–78; sequence AS. Repeat 25 spans residues 79–80; the sequence is GT. The stretch at 81–82 is one 26; approximate repeat; it reads AT. Copy 27 of the repeat occupies 83 to 84; it reads GT. One copy of the 28; approximate repeat lies at 85–86; that stretch reads AN. 2 repeat units span residues 87-88 and 89-90. One copy of the 31; approximate repeat lies at 91–92; that stretch reads GK. The stretch at 93-94 is repeat 32; it reads GT. The span at 101-113 shows a compositional bias: gly residues; that stretch reads SGSGSGTGTGTGT. Residues 114-129 are compositionally biased toward low complexity; it reads GTTTTTTTGNNSSSST. The span at 130-141 shows a compositional bias: polar residues; the sequence is PPVTLTESLLNK.

In terms of assembly, forms a heterodimer with timeless (TIM); the complex then translocates into the nucleus. Phosphorylated with a circadian rhythmicity, probably by the double-time protein (dbt). Phosphorylation could be implicated in the stability of per monomer and in the formation of heterodimer per-tim.

The protein resides in the nucleus. It localises to the cytoplasm. It is found in the perinuclear region. Essential for biological clock functions. Determines the period length of circadian and ultradian rhythms; an increase in PER dosage leads to shortened circadian rhythms and a decrease leads to lengthened circadian rhythms. Essential for the circadian rhythmicity of locomotor activity, eclosion behavior, and for the rhythmic component of the male courtship song that originates in the thoracic nervous system. The biological cycle depends on the rhythmic formation and nuclear localization of the TIM-PER complex. Light induces the degradation of TIM, which promotes elimination of PER. Nuclear activity of the heterodimer coordinatively regulates PER and TIM transcription through a negative feedback loop. Behaves as a negative element in circadian transcriptional loop. Does not appear to bind DNA, suggesting indirect transcriptional inhibition. The chain is Period circadian protein (per) from Drosophila serrata (Fruit fly).